The chain runs to 565 residues: NAD-dependent malic enzyme (565 aa).

Tyr-103 serves as the catalytic Proton donor. Lys-177 acts as the Proton acceptor in catalysis. The a divalent metal cation site is built by Glu-248, Asp-249, and Asp-272. Residues Asp-272 and Asn-419 each coordinate NAD(+). Ser-445 carries the post-translational modification Phosphoserine.

This sequence belongs to the malic enzymes family. Requires Mg(2+) as cofactor. Mn(2+) serves as cofactor.

It carries out the reaction (S)-malate + NAD(+) = pyruvate + CO2 + NADH. The catalysed reaction is oxaloacetate + H(+) = pyruvate + CO2. The polypeptide is NAD-dependent malic enzyme (mae2) (Schizosaccharomyces pombe (strain 972 / ATCC 24843) (Fission yeast)).